The chain runs to 688 residues: Complement C1s subcomponent (688 aa).

The first 15 residues, 1–15 (MWCIVLFSLLAWVYA), serve as a signal peptide directing secretion. Residues 16 to 130 (EPTMYGEILS…TGFAAYYVAT (115 aa)) enclose the CUB 1 domain. Residues Glu-60, Asp-68, Asp-113, Asp-131, Ile-132, and Glu-134 each coordinate Ca(2+). A disulfide bond links Cys-65 and Cys-83. The 42-residue stretch at 131 to 172 (DINECTDFVDVPCSHFCNNFIGGYFCSCPPEYFLHDDMKNCG) folds into the EGF-like; calcium-binding domain. Disulfide bonds link Cys-135–Cys-147, Cys-143–Cys-156, and Cys-158–Cys-171. Ca(2+) contacts are provided by Asn-149, Phe-150, and Gly-153. The residue at position 149 (Asn-149) is a (3R)-3-hydroxyasparagine. Asn-174 carries N-linked (GlcNAc...) asparagine glycosylation. An intrachain disulfide couples Cys-175 to Cys-202. Positions 175-290 (CSGDVFTALI…KGWKLRYHGD (116 aa)) constitute a CUB 2 domain. Ca(2+) contacts are provided by Glu-226, Asp-236, Asp-275, Gly-278, and Gln-279. Cys-234 and Cys-251 are joined by a disulfide. Sushi domains are found at residues 292-356 (MPCP…KCQP) and 357-423 (VDCG…KCVP). Disulfide bonds link Cys-294-Cys-341, Cys-321-Cys-354, Cys-359-Cys-403, Cys-386-Cys-421, Cys-425-Cys-549, Cys-595-Cys-618, and Cys-628-Cys-659. A glycan (N-linked (GlcNAc...) asparagine) is linked at Asn-406. The 243-residue stretch at 438-680 (IIGGSDADIK…YVDWIMKTMQ (243 aa)) folds into the Peptidase S1 domain. Active-site charge relay system residues include His-475 and Asp-529. The Charge relay system role is filled by Ser-632.

This sequence belongs to the peptidase S1 family. As to quaternary structure, core component of the complement C1 complex, a calcium-dependent complex composed of 1 molecule of the C1Q subcomplex, 2 molecules of C1R and 2 molecules of C1S. The C1Q subcomplex is composed 18 subunits: 3 chains of C1QA, C1QB, and C1QC trimerize to form 6 collagen-like triple helices connected to six globular ligand-recognition modules. In terms of processing, cleaved and activated by C1R to generate Complement C1s subcomponent heavy and light chains. The iron and 2-oxoglutarate dependent 3-hydroxylation of aspartate and asparagine is (R) stereospecific within EGF domains.

Its subcellular location is the secreted. The protein localises to the cell surface. The enzyme catalyses Cleavage of Arg-|-Ala bond in complement component C4 to form C4a and C4b, and Lys(or Arg)-|-Lys bond in complement component C2 to form C2a and C2b: the 'classical' pathway C3 convertase.. Its activity is regulated as follows. Cleaved and activated by C1R. Immunoglobulin-binding promotes autoactivation of C1R, which results in the cleavage of the Arg-Ile bond in the catalytic domain. Inhibited by C1 inhibitor (SERPING1). In terms of biological role, component of the complement C1 complex, a multiprotein complex that initiates the classical pathway of the complement system, a cascade of proteins that leads to phagocytosis and breakdown of pathogens and signaling that strengthens the adaptive immune system. C1S is activated following association of the C1 complex with immunoglobulins (IgG or IgM) complexed with antigens to form antigen-antibody complexes on the surface of pathogens. C1S is cleaved and activated by C1R to generate C1s subcomponent heavy and light chains. C1s subcomponent light chain then cleaves and activates C2 and C4, the next components of the classical complement pathway. Its function is as follows. Serine protease component of the complement C1 complex, which catalyzes cleavage and activation of C2 and C4, the next components of the classical complement pathway. Also able to cleave C1 inhibitor (SERPING1) in vitro; additional evidence is however required to confirm this result in vivo. Also cleaves IGFBP5 and thereby inhibits the trophic effects of IGF1. The sequence is that of Complement C1s subcomponent from Homo sapiens (Human).